Reading from the N-terminus, the 240-residue chain is TATA-box-binding protein (240 aa).

A disordered region spans residues 21-61 (NTRQVWENQNRDGTKPATTFQSEEDIKRAAPESEKDTSATS). Over residues 44-57 (EDIKRAAPESEKDT) the composition is skewed to basic and acidic residues. 2 repeat units span residues 67–143 (LQNI…ARII) and 157–234 (IQNI…YPVL).

This sequence belongs to the TBP family. In terms of assembly, binds DNA as monomer. The 1.2 MDa TFIID complex is composed of TATA binding protein (TBP) and the 14 TBP-associated factors. One copy of each TAF1, TAF2, TAF3, TAF7, TAF8, TAF11, TAF13, two copies of each TAF4, TAF5, TAF6, TAF9, TAF10, TAF12, and three copies of TAF14. Interacts with TFC8.

It is found in the nucleus. In terms of biological role, general transcription factor that functions at the core of the DNA-binding general transcription factor complex TFIID. Binding of TFIID to a promoter (with or without TATA element) is the initial step in preinitiation complex (PIC) formation. TFIID plays a key role in the regulation of gene expression by RNA polymerase II through different activities such as transcription activator interaction, core promoter recognition and selectivity, TFIIA and TFIIB interaction, chromatin modification (histone acetylation by TAF1), facilitation of DNA opening and initiation of transcription. This is TATA-box-binding protein (SPT15) from Saccharomyces cerevisiae (strain ATCC 204508 / S288c) (Baker's yeast).